Here is a 218-residue protein sequence, read N- to C-terminus: Thiamine-phosphate synthase (218 aa).

4-amino-2-methyl-5-(diphosphooxymethyl)pyrimidine is bound by residues 43–47 and Asn-78; that span reads QFRDK. 2 residues coordinate Mg(2+): Asp-79 and Asp-98. 4-amino-2-methyl-5-(diphosphooxymethyl)pyrimidine is bound at residue Ser-117. Position 143-145 (143-145) interacts with 2-[(2R,5Z)-2-carboxy-4-methylthiazol-5(2H)-ylidene]ethyl phosphate; the sequence is TNS. Residue Lys-146 participates in 4-amino-2-methyl-5-(diphosphooxymethyl)pyrimidine binding. Residues Gly-174 and 194–195 contribute to the 2-[(2R,5Z)-2-carboxy-4-methylthiazol-5(2H)-ylidene]ethyl phosphate site; that span reads IS.

This sequence belongs to the thiamine-phosphate synthase family. It depends on Mg(2+) as a cofactor.

The enzyme catalyses 2-[(2R,5Z)-2-carboxy-4-methylthiazol-5(2H)-ylidene]ethyl phosphate + 4-amino-2-methyl-5-(diphosphooxymethyl)pyrimidine + 2 H(+) = thiamine phosphate + CO2 + diphosphate. The catalysed reaction is 2-(2-carboxy-4-methylthiazol-5-yl)ethyl phosphate + 4-amino-2-methyl-5-(diphosphooxymethyl)pyrimidine + 2 H(+) = thiamine phosphate + CO2 + diphosphate. It catalyses the reaction 4-methyl-5-(2-phosphooxyethyl)-thiazole + 4-amino-2-methyl-5-(diphosphooxymethyl)pyrimidine + H(+) = thiamine phosphate + diphosphate. Its pathway is cofactor biosynthesis; thiamine diphosphate biosynthesis; thiamine phosphate from 4-amino-2-methyl-5-diphosphomethylpyrimidine and 4-methyl-5-(2-phosphoethyl)-thiazole: step 1/1. Functionally, condenses 4-methyl-5-(beta-hydroxyethyl)thiazole monophosphate (THZ-P) and 2-methyl-4-amino-5-hydroxymethyl pyrimidine pyrophosphate (HMP-PP) to form thiamine monophosphate (TMP). The chain is Thiamine-phosphate synthase from Lactococcus lactis subsp. cremoris (strain MG1363).